The sequence spans 233 residues: Probable flavin reductase (233 aa).

In terms of domain architecture, FAD-binding FR-type spans 1 to 133 (MLCSIEKIEP…NSLAQGFNQP (133 aa)). Residue 111-115 (GGTGM) coordinates pyridine.

Belongs to the Fre/LuxG FAD/NAD(P) flavoprotein oxidoreductase family.

Probable flavin reductase in the luminescent systems of different marine bacteria. The protein is Probable flavin reductase (luxG) of Vibrio harveyi (Beneckea harveyi).